Consider the following 379-residue polypeptide: Cytochrome b (379 aa).

4 consecutive transmembrane segments (helical) span residues 33 to 53, 77 to 98, 113 to 133, and 178 to 198; these read FGSL…FLAM, WLIR…FIHV, WNIG…GYVL, and FFAF…VHLL. Heme b is bound by residues H83 and H97. Heme b-binding residues include H182 and H196. H201 serves as a coordination point for a ubiquinone. The next 4 helical transmembrane spans lie at 226–246, 288–308, 320–340, and 347–367; these read TKDL…VLFF, LGGV…PLLN, VTQV…WIGG, and FTTI…ILIP.

It belongs to the cytochrome b family. The cytochrome bc1 complex contains 11 subunits: 3 respiratory subunits (MT-CYB, CYC1 and UQCRFS1), 2 core proteins (UQCRC1 and UQCRC2) and 6 low-molecular weight proteins (UQCRH/QCR6, UQCRB/QCR7, UQCRQ/QCR8, UQCR10/QCR9, UQCR11/QCR10 and a cleavage product of UQCRFS1). This cytochrome bc1 complex then forms a dimer. It depends on heme b as a cofactor.

Its subcellular location is the mitochondrion inner membrane. Its function is as follows. Component of the ubiquinol-cytochrome c reductase complex (complex III or cytochrome b-c1 complex) that is part of the mitochondrial respiratory chain. The b-c1 complex mediates electron transfer from ubiquinol to cytochrome c. Contributes to the generation of a proton gradient across the mitochondrial membrane that is then used for ATP synthesis. The protein is Cytochrome b (MT-CYB) of Akodon cursor (Cursor grass mouse).